The following is a 431-amino-acid chain: Enolase (431 aa).

Residue Gln163 participates in (2R)-2-phosphoglycerate binding. The Proton donor role is filled by Glu205. Asp242, Glu288, and Asp315 together coordinate Mg(2+). 4 residues coordinate (2R)-2-phosphoglycerate: Lys340, Arg369, Ser370, and Lys391. The active-site Proton acceptor is Lys340.

The protein belongs to the enolase family. The cofactor is Mg(2+).

Its subcellular location is the cytoplasm. The protein localises to the secreted. The protein resides in the cell surface. The enzyme catalyses (2R)-2-phosphoglycerate = phosphoenolpyruvate + H2O. It participates in carbohydrate degradation; glycolysis; pyruvate from D-glyceraldehyde 3-phosphate: step 4/5. Functionally, catalyzes the reversible conversion of 2-phosphoglycerate (2-PG) into phosphoenolpyruvate (PEP). It is essential for the degradation of carbohydrates via glycolysis. The chain is Enolase from Bacillus anthracis (strain A0248).